The chain runs to 589 residues: Type I restriction enzyme EcoAI specificity subunit (589 aa).

This sequence belongs to the type-I restriction system S methylase family. In terms of assembly, the type I restriction/modification system is composed of three polypeptides R, M and S. The restriction enzyme has stoichiometry R(2)M(2)S(1) while the methyltransferase is M(2)S(1).

In terms of biological role, the specificity (S) subunit of a type I restriction enzyme; this subunit dictates DNA sequence specificity. The M and S subunits together form a methyltransferase (MTase) that methylates A-2 on the top strand and A-3 on the bottom strand of the sequence 5'-GAGN(7)GTCA-3'. In the presence of the R subunit the complex can also act as an endonuclease, binding to the same target sequence but cutting the DNA some distance from this site. Whether the DNA is cut or modified depends on the methylation state of the target sequence. When the target site is unmodified, the DNA is cut. When the target site is hemimethylated, the complex acts as a maintenance MTase modifying the DNA so that both strands become methylated. After locating a non-methylated recognition site, the enzyme complex serves as a molecular motor that translocates DNA in an ATP-dependent manner until a collision occurs that triggers cleavage. The polypeptide is Type I restriction enzyme EcoAI specificity subunit (Escherichia coli).